The following is a 98-amino-acid chain: NADH-ubiquinone oxidoreductase chain 4L (98 aa).

The next 3 helical transmembrane spans lie at 1-21 (MSPI…GLLI), 30-50 (LLCL…LALT), and 61-81 (IILL…LVMV).

This sequence belongs to the complex I subunit 4L family. As to quaternary structure, core subunit of respiratory chain NADH dehydrogenase (Complex I) which is composed of 45 different subunits.

Its subcellular location is the mitochondrion inner membrane. It catalyses the reaction a ubiquinone + NADH + 5 H(+)(in) = a ubiquinol + NAD(+) + 4 H(+)(out). Core subunit of the mitochondrial membrane respiratory chain NADH dehydrogenase (Complex I) which catalyzes electron transfer from NADH through the respiratory chain, using ubiquinone as an electron acceptor. Part of the enzyme membrane arm which is embedded in the lipid bilayer and involved in proton translocation. This Chrysochloris asiatica (Cape golden mole) protein is NADH-ubiquinone oxidoreductase chain 4L (MT-ND4L).